Consider the following 153-residue polypeptide: Aspartate carbamoyltransferase regulatory chain (153 aa).

Residues Cys109, Cys114, Cys138, and Cys141 each contribute to the Zn(2+) site.

It belongs to the PyrI family. Contains catalytic and regulatory chains. Zn(2+) serves as cofactor.

Functionally, involved in allosteric regulation of aspartate carbamoyltransferase. This chain is Aspartate carbamoyltransferase regulatory chain, found in Salmonella paratyphi A (strain ATCC 9150 / SARB42).